Consider the following 664-residue polypeptide: Macrolide export ATP-binding/permease protein MacB (664 aa).

Positions 8–245 constitute an ABC transporter domain; the sequence is LELVDVHRTY…AGPSVPLTLD (238 aa). Position 44–51 (44–51) interacts with ATP; sequence GSSGSGKS. 4 consecutive transmembrane segments (helical) span residues 283–303, 543–563, 602–622, and 627–647; these read LLSV…MALG, GAIA…IMLV, IIGI…AGWA, and IVSI…FGLW.

It belongs to the ABC transporter superfamily. Macrolide exporter (TC 3.A.1.122) family. Homodimer.

Its subcellular location is the cell inner membrane. Its function is as follows. Non-canonical ABC transporter that contains transmembrane domains (TMD), which form a pore in the inner membrane, and an ATP-binding domain (NBD), which is responsible for energy generation. Confers resistance against macrolides. In Chlorobium luteolum (strain DSM 273 / BCRC 81028 / 2530) (Pelodictyon luteolum), this protein is Macrolide export ATP-binding/permease protein MacB.